The following is a 236-amino-acid chain: tRNA1(Val) (adenine(37)-N6)-methyltransferase (236 aa).

It belongs to the methyltransferase superfamily. tRNA (adenine-N(6)-)-methyltransferase family.

The protein localises to the cytoplasm. It catalyses the reaction adenosine(37) in tRNA1(Val) + S-adenosyl-L-methionine = N(6)-methyladenosine(37) in tRNA1(Val) + S-adenosyl-L-homocysteine + H(+). In terms of biological role, specifically methylates the adenine in position 37 of tRNA(1)(Val) (anticodon cmo5UAC). The sequence is that of tRNA1(Val) (adenine(37)-N6)-methyltransferase from Histophilus somni (strain 2336) (Haemophilus somnus).